We begin with the raw amino-acid sequence, 66 residues long: MILVNVHAGNCDNTLKNFKKKLQRELYFRKMKEQRYYETPSAKRVRKAQEAARRIRKFARKKMYEE.

The protein belongs to the bacterial ribosomal protein bS21 family.

The chain is Small ribosomal subunit protein bS21 from Rickettsia typhi (strain ATCC VR-144 / Wilmington).